A 339-amino-acid polypeptide reads, in one-letter code: RNA 3'-terminal phosphate cyclase (339 aa).

Residues Gln-101 and 283-286 (HMSD) each bind ATP. The active-site Tele-AMP-histidine intermediate is His-307.

This sequence belongs to the RNA 3'-terminal cyclase family. Type 1 subfamily.

The protein localises to the cytoplasm. It catalyses the reaction a 3'-end 3'-phospho-ribonucleotide-RNA + ATP = a 3'-end 2',3'-cyclophospho-ribonucleotide-RNA + AMP + diphosphate. Catalyzes the conversion of 3'-phosphate to a 2',3'-cyclic phosphodiester at the end of RNA. The mechanism of action of the enzyme occurs in 3 steps: (A) adenylation of the enzyme by ATP; (B) transfer of adenylate to an RNA-N3'P to produce RNA-N3'PP5'A; (C) and attack of the adjacent 2'-hydroxyl on the 3'-phosphorus in the diester linkage to produce the cyclic end product. The biological role of this enzyme is unknown but it is likely to function in some aspects of cellular RNA processing. In Sulfurisphaera tokodaii (strain DSM 16993 / JCM 10545 / NBRC 100140 / 7) (Sulfolobus tokodaii), this protein is RNA 3'-terminal phosphate cyclase.